The primary structure comprises 157 residues: Serine-protein kinase RsbW (157 aa).

It belongs to the anti-sigma-factor family.

It carries out the reaction L-seryl-[protein] + ATP = O-phospho-L-seryl-[protein] + ADP + H(+). It catalyses the reaction L-threonyl-[protein] + ATP = O-phospho-L-threonyl-[protein] + ADP + H(+). Functionally, negative regulator of sigma-B activity. Phosphorylates and inactivates its specific antagonist protein, RsbV. Upon phosphorylation of RsbV, RsbW is released and binds to sigma-B, thereby blocking its ability to form an RNA polymerase holoenzyme (E-sigma-B). The chain is Serine-protein kinase RsbW from Listeria monocytogenes serotype 4b (strain CLIP80459).